Reading from the N-terminus, the 208-residue chain is MVFDELISEFDRGLRSLTGISRMSRPVPAPAEAPAAELTPAERTHAAGLMRVNHVGEVCAQALYQAQKLTARTASAKAMFEEAAREEEDHLAWTAHRLKELDSRPSLLNPLWYAGSLAIGVAAGALGDKVSLGFMAETERQVESHLEGHMSELPAADTASRAIVDQMRIDEVKHGKAAADAGGIELPLPARMLMRAASKVMTSTAYYL.

Positions 57, 87, 90, 139, 171, and 174 each coordinate Fe cation.

The protein belongs to the COQ7 family. Fe cation is required as a cofactor.

It localises to the cell membrane. It catalyses the reaction a 5-methoxy-2-methyl-3-(all-trans-polyprenyl)benzene-1,4-diol + AH2 + O2 = a 3-demethylubiquinol + A + H2O. Its pathway is cofactor biosynthesis; ubiquinone biosynthesis. Functionally, catalyzes the hydroxylation of 2-nonaprenyl-3-methyl-6-methoxy-1,4-benzoquinol during ubiquinone biosynthesis. This Burkholderia lata (strain ATCC 17760 / DSM 23089 / LMG 22485 / NCIMB 9086 / R18194 / 383) protein is 3-demethoxyubiquinol 3-hydroxylase.